The chain runs to 279 residues: Putative Delta(7)-sterol-C5(6)-desaturase 2 (279 aa).

Transmembrane regions (helical) follow at residues 48-68 (LAGN…IYYL) and 127-147 (FLCF…IYWV). The region spanning 134–263 (ALYLVLVEFM…TIWMDWMFGS (130 aa)) is the Fatty acid hydroxylase domain. The Histidine box-1 signature appears at 148-152 (HKELH). The Histidine box-2 signature appears at 162–166 (HATHH). The chain crosses the membrane as a helical span at residues 194–214 (HVIALFIVPIHLITHLSLLFL). The Histidine box-3 signature appears at 239–243 (HTIHH).

This sequence belongs to the sterol desaturase family. The cofactor is Fe cation.

The protein localises to the endoplasmic reticulum membrane. The enzyme catalyses a Delta(7)-sterol + 2 Fe(II)-[cytochrome b5] + O2 + 2 H(+) = a Delta(5),Delta(7)-sterol + 2 Fe(III)-[cytochrome b5] + 2 H2O. The sequence is that of Putative Delta(7)-sterol-C5(6)-desaturase 2 (HDF7) from Arabidopsis thaliana (Mouse-ear cress).